We begin with the raw amino-acid sequence, 193 residues long: Dual-action ribosomal maturation protein DarP (193 aa).

A compositionally biased stretch (basic and acidic residues) spans 1–10; the sequence is MRGRDEDTGE. Disordered stretches follow at residues 1 to 20 and 170 to 193; these read MRGRDEDTGEFRGASRSQQR and SQKPGLESGDAGLEDEESASENDE. A compositionally biased stretch (acidic residues) spans 181-193; that stretch reads GLEDEESASENDE.

It belongs to the DarP family.

Its subcellular location is the cytoplasm. Member of a network of 50S ribosomal subunit biogenesis factors which assembles along the 30S-50S interface, preventing incorrect 23S rRNA structures from forming. Promotes peptidyl transferase center (PTC) maturation. This is Dual-action ribosomal maturation protein DarP from Xanthomonas campestris pv. campestris (strain 8004).